The primary structure comprises 831 residues: V-type proton ATPase 116 kDa subunit a1 (831 aa).

The Cytoplasmic segment spans residues 1-388 (MGELFRSEEM…DAYGIGSYRE (388 aa)). Residues 389-407 (INPAPYTIITFPFLFAVMF) form a helical membrane-spanning segment. Topologically, residues 408–409 (GD) are vacuolar. Residues 410–426 (FGHGILMTLFAVWMVVR) traverse the membrane as a helical segment. Residues 427–441 (ESRILSQKIDNELFS) lie on the Cytoplasmic side of the membrane. A helical transmembrane segment spans residues 442-471 (MMFSGRYIILLMGLFSTYTGLIYNDCFSKA). At 472-534 (LNLFGSSWSV…ATNKLTFLNS (63 aa)) the chain is on the vacuolar side. A helical transmembrane segment spans residues 535–554 (FKMKMSVILGIIHMIFGVAL). The Cytoplasmic portion of the chain corresponds to 555–572 (SVLNHIYFKKPLNIYLSF). Residues 573–593 (IPEMIFMTTLFGYLVILIIYK) form a helical membrane-spanning segment. The Vacuolar segment spans residues 594 to 638 (WCAYDVSTSMVAPSLLIHFINMFLFSYQDTSLPMLYKGQMGLQCF). A helical transmembrane segment spans residues 639–658 (LVVCAIICVPWMLVLKPLIL). At 659–718 (RRQYLRRKHLGTHNFGGIRVGNGPTEEDAEIIQHDQLSMHSDEEEEFDFGDTVVHQAIHT) the chain is on the cytoplasmic side. The chain crosses the membrane as a helical span at residues 719–743 (IEYCLGCISNTASYLRLWALSLAHA). At 744–764 (QLSEVLWTMVMHIGLNIRSLG) the chain is on the vacuolar side. Residues 765 to 803 (GGIALVFIFSAFATLTIAILLIMEGLSAFLHALRLHWVE) form a helical membrane-spanning segment. Residues 804–831 (FRNKFYMGTGFKFLPFSFETIWEGKFDD) are Cytoplasmic-facing.

This sequence belongs to the V-ATPase 116 kDa subunit family. In terms of assembly, V-ATPase is a heteromultimeric enzyme made up of two complexes: the ATP-hydrolytic V1 complex and the proton translocation V0 complex. The V1 complex consists of three catalytic AB heterodimers that form a heterohexamer, three peripheral stalks each consisting of EG heterodimers, one central rotor including subunits D and F, and the regulatory subunits C and H. The proton translocation complex V0 consists of the proton transport subunit a, a ring of proteolipid subunits c9c'', rotary subunit d, subunits e and f, and two accessory subunits.

The protein resides in the cytoplasmic vesicle. The protein localises to the clathrin-coated vesicle membrane. Its subcellular location is the secretory vesicle. It is found in the synaptic vesicle membrane. It localises to the melanosome. Its function is as follows. Subunit of the V0 complex of vacuolar(H+)-ATPase (V-ATPase), a multisubunit enzyme composed of a peripheral complex (V1) that hydrolyzes ATP and a membrane integral complex (V0) that translocates protons. V-ATPase is responsible for acidifying and maintaining the pH of intracellular compartments and in some cell types, is targeted to the plasma membrane, where it is responsible for acidifying the extracellular environment. Required for assembly and activity of the vacuolar ATPase. This is V-type proton ATPase 116 kDa subunit a1 (atp6v0a1) from Xenopus laevis (African clawed frog).